We begin with the raw amino-acid sequence, 294 residues long: Protein RarD (294 aa).

At 1–11 (MDAKQTRQGVL) the chain is on the cytoplasmic side. Residues 12 to 34 (LALAAYFIWGIAPAYFKLIYYVP) traverse the membrane as a helical segment. Residues 18 to 145 (FIWGIAPAYF…AVCGVLVQLW (128 aa)) form the EamA domain. Residues 35–37 (ADE) lie on the Periplasmic side of the membrane. The helical transmembrane segment at 38-60 (ILTHRVIWSFFFMVALLSVSRQW) threads the bilayer. Residues 61-72 (RQVKRLLKTPKK) lie on the Cytoplasmic side of the membrane. The helical transmembrane segment at 73 to 95 (IFLLALSAVLVGGNWLLFIWAVN) threads the bilayer. Over 96 to 99 (NHHM) the chain is Periplasmic. A helical transmembrane segment spans residues 100 to 122 (LEASLGYFINPLVNILLGMIFLG). Topologically, residues 123–128 (ERFRRM) are cytoplasmic. A helical transmembrane segment spans residues 129-146 (QWLAVILAVCGVLVQLWT). Topologically, residues 147 to 149 (FGS) are periplasmic. The chain crosses the membrane as a helical span at residues 150-167 (LPIIALGLAFSFAFYGLV). The Cytoplasmic portion of the chain corresponds to 168–179 (RKKIAVEAQTGM). A helical membrane pass occupies residues 180–197 (LVETLWLLPVAAIYLFGI). The Periplasmic segment spans residues 198–211 (ADSPTSHMGQNALS). The helical transmembrane segment at 212-234 (LNLLLMAAGVVTTIPLLCFTGAA) threads the bilayer. At 235–238 (TRLR) the chain is on the cytoplasmic side. Residues 239–261 (LSTLGFFQYIGPTLMFLLAVTFY) traverse the membrane as a helical segment. Residues 262–270 (GEVPGADKM) lie on the Periplasmic side of the membrane. Residues 271-290 (VTFAFIWVALAIFVMDAIYT) traverse the membrane as a helical segment. Residues 291–294 (QRKK) lie on the Cytoplasmic side of the membrane.

Belongs to the EamA transporter family.

The protein resides in the cell inner membrane. This Salmonella typhimurium (strain LT2 / SGSC1412 / ATCC 700720) protein is Protein RarD (rarD).